The chain runs to 207 residues: Segregation and condensation protein B (207 aa).

Residues 173-207 are disordered; sequence DDTAESDNDSADLYYRQFEQTLNETGPETAPKGEQ.

It belongs to the ScpB family. As to quaternary structure, homodimer. Homodimerization may be required to stabilize the binding of ScpA to the Smc head domains. Component of a cohesin-like complex composed of ScpA, ScpB and the Smc homodimer, in which ScpA and ScpB bind to the head domain of Smc. The presence of the three proteins is required for the association of the complex with DNA.

It is found in the cytoplasm. Participates in chromosomal partition during cell division. May act via the formation of a condensin-like complex containing Smc and ScpA that pull DNA away from mid-cell into both cell halves. This Latilactobacillus sakei subsp. sakei (strain 23K) (Lactobacillus sakei subsp. sakei) protein is Segregation and condensation protein B.